The chain runs to 430 residues: Adenylosuccinate synthetase (430 aa).

GTP is bound by residues 12–18 (GDEGKGK) and 40–42 (GHT). Asp-13 acts as the Proton acceptor in catalysis. Mg(2+)-binding residues include Asp-13 and Gly-40. IMP contacts are provided by residues 13-16 (DEGK), 38-41 (NAGH), Thr-128, Arg-142, Gln-223, Thr-238, and Arg-302. His-41 (proton donor) is an active-site residue. 298–304 (TTTGRPR) provides a ligand contact to substrate. Residues Arg-304, 330–332 (SID), and 412–414 (SVG) each bind GTP.

This sequence belongs to the adenylosuccinate synthetase family. As to quaternary structure, homodimer. Requires Mg(2+) as cofactor.

The protein localises to the cytoplasm. The catalysed reaction is IMP + L-aspartate + GTP = N(6)-(1,2-dicarboxyethyl)-AMP + GDP + phosphate + 2 H(+). It functions in the pathway purine metabolism; AMP biosynthesis via de novo pathway; AMP from IMP: step 1/2. Plays an important role in the de novo pathway of purine nucleotide biosynthesis. Catalyzes the first committed step in the biosynthesis of AMP from IMP. This is Adenylosuccinate synthetase from Streptococcus agalactiae serotype Ia (strain ATCC 27591 / A909 / CDC SS700).